Consider the following 214-residue polypeptide: Killer cell lectin-like receptor subfamily B member 1 (214 aa).

Topologically, residues 1-42 (MDAPVLYAELNLAETRGLRCTSAPSLPQDACQGPGWHRVALK) are cytoplasmic. The helical; Signal-anchor for type II membrane protein transmembrane segment at 43–63 (LGCAGLIFLLMVLSVLVGFLV) threads the bilayer. The Extracellular portion of the chain corresponds to 64–214 (QKPLIEKCSV…WICQKTLKHV (151 aa)). The C-type lectin domain occupies 98–208 (HCDKCLFTSQ…CSSDNHWICQ (111 aa)). Cystine bridges form between Cys119–Cys207 and Cys186–Cys199.

The protein localises to the membrane. The sequence is that of Killer cell lectin-like receptor subfamily B member 1 (Klrb1) from Mus musculus (Mouse).